A 1307-amino-acid polypeptide reads, in one-letter code: tRNA(adenine(34)) deaminase, chloroplastic (1307 aa).

Residues 1–55 (MFNTYTNSLQWPIRSRNQQDYCSLLPERSESYKLSKAYTSSRCYCVSSRSSCCCC) constitute a chloroplast transit peptide. Disordered regions lie at residues 245 to 377 (EYIG…ESTG), 439 to 458 (SSED…SSQE), 544 to 563 (HNPL…SHTS), 576 to 618 (EKRL…GQTT), 753 to 807 (GVIN…ATEG), 837 to 957 (SRAG…EEGG), and 975 to 1073 (LPSR…SVSA). Over residues 267 to 278 (SSCSSYYSLASS) the composition is skewed to low complexity. The stretch at 280–309 (EFESDTEDQEEDVEIYRENVRSSEKKVVDQ) forms a coiled coil. Residues 281–292 (FESDTEDQEEDV) show a composition bias toward acidic residues. The segment covering 293-321 (EIYRENVRSSEKKVVDQSAKRLKSRKEAS) has biased composition (basic and acidic residues). Over residues 367-377 (QTENRVSESTG) the composition is skewed to polar residues. Residues 439–448 (SSEDRVSEMR) are compositionally biased toward basic and acidic residues. Polar residues-rich tracts occupy residues 546–563 (PLQT…SHTS) and 582–591 (QGSTTAVQSD). Composition is skewed to basic and acidic residues over residues 592–615 (SKVE…KKDG) and 760–771 (EEQRAESNQLKR). A compositionally biased stretch (polar residues) spans 852–863 (SSPNESVSSATW). Over residues 866–883 (GREHDGSSDDNTKGDKVL) the composition is skewed to basic and acidic residues. Composition is skewed to polar residues over residues 895-907 (VGQT…SEYP), 924-947 (SSPS…SGNQ), and 1045-1073 (SGSS…SVSA). In terms of domain architecture, CMP/dCMP-type deaminase spans 1108-1230 (TVDEIFMREA…RLFPGGEGNG (123 aa)). Zn(2+) is bound at residue His1159. The active-site Proton donor is the Glu1161. Zn(2+) is bound by residues Cys1189 and Cys1192. The segment at 1268-1293 (QLRRKKKDKNSDPPTPTDHHHHHLPK) is disordered.

Belongs to the cytidine and deoxycytidylate deaminase family. Homodimer. Zn(2+) is required as a cofactor.

The protein resides in the plastid. It is found in the chloroplast. The enzyme catalyses adenosine(34) in tRNA + H2O + H(+) = inosine(34) in tRNA + NH4(+). In terms of biological role, deaminates adenosines to inosines in tRNA-Arg(ACG). Exclusively involved in A-to-I editing of the prokaryote-type chloroplast-tRNA and not involved in C-to-U editing. This is tRNA(adenine(34)) deaminase, chloroplastic (TADA) from Arabidopsis thaliana (Mouse-ear cress).